Here is a 348-residue protein sequence, read N- to C-terminus: Protein RecA (348 aa).

64–71 is a binding site for ATP; that stretch reads GPESSGKT. Residues 324-335 show a composition bias toward basic and acidic residues; that stretch reads EYEIDGSNKEPL. Positions 324 to 348 are disordered; it reads EYEIDGSNKEPLAETEETLSLLDDE. Residues 336-348 are compositionally biased toward acidic residues; sequence AETEETLSLLDDE.

The protein belongs to the RecA family.

The protein resides in the cytoplasm. Functionally, can catalyze the hydrolysis of ATP in the presence of single-stranded DNA, the ATP-dependent uptake of single-stranded DNA by duplex DNA, and the ATP-dependent hybridization of homologous single-stranded DNAs. It interacts with LexA causing its activation and leading to its autocatalytic cleavage. This is Protein RecA from Listeria ivanovii.